Consider the following 353-residue polypeptide: MKIAVLPGDGIGPEIISQAVKVLEALKSEGAKIEMETAPIGGAGYDAAGDPLPEATLKLAREADAVLLGAVGGPQYDTLDRPLRPERGLLRIRKELNLFANLRPALLYPELASASSLKPEVVSGLDLMIVRELTGDVYFGQPRGIETRNGERVGFNTMLYSESEVRRVAHVAFGIAMKRGKKLCSVEKANVLECSELWKEIMIEVAKDYPEVELSHMYVDNAAMQLIRAPKQFDTIVTGNIFGDILSDAASMLSGSIGMLPSASLDEHNKGMYEPIHGSAPDIAGKNLANPLATILSVAMMYRYTFADLATADRIENAVKQVIAKGYRTGDIWTEGTQKVSCSEMGDAVVVAL.

An NAD(+)-binding site is contributed by 73-86 (GPQYDTLDRPLRPE). The substrate site is built by R93, R103, R131, and D220. Mg(2+)-binding residues include D220, D244, and D248. 278–290 (GSAPDIAGKNLAN) serves as a coordination point for NAD(+).

This sequence belongs to the isocitrate and isopropylmalate dehydrogenases family. LeuB type 1 subfamily. In terms of assembly, homodimer. Mg(2+) is required as a cofactor. Mn(2+) serves as cofactor.

It localises to the cytoplasm. It catalyses the reaction (2R,3S)-3-isopropylmalate + NAD(+) = 4-methyl-2-oxopentanoate + CO2 + NADH. The protein operates within amino-acid biosynthesis; L-leucine biosynthesis; L-leucine from 3-methyl-2-oxobutanoate: step 3/4. Functionally, catalyzes the oxidation of 3-carboxy-2-hydroxy-4-methylpentanoate (3-isopropylmalate) to 3-carboxy-4-methyl-2-oxopentanoate. The product decarboxylates to 4-methyl-2 oxopentanoate. In Thiobacillus denitrificans (strain ATCC 25259 / T1), this protein is 3-isopropylmalate dehydrogenase.